The chain runs to 465 residues: Chaperone protein dnaJ C76, chloroplastic (465 aa).

Residues 1-38 (MTPAIFSPTTLPPSTATWPCSTSQKLITVRSPLKFKCR) constitute a chloroplast transit peptide. One can recognise a J domain in the interval 50–113 (DLYDLLGIDR…ISRQAYDKEQ (64 aa)). The disordered stretch occupies residues 346–385 (AALPSSGNNNGSKASSNPQVTRKTFPSEEKPTSRRENRRQ). Residues 350–362 (SSGNNNGSKASSN) are compositionally biased toward low complexity. Residues 370-384 (FPSEEKPTSRRENRR) show a composition bias toward basic and acidic residues.

This sequence belongs to the DnaJ family. As to expression, expressed in roots, exclusively in the stele.

The protein resides in the plastid. It is found in the chloroplast. May function together with HSC70 chaperone to assist protein folding and prevent protein aggregation during salt stress in the chloroplast. Involved in root development. Required for the position-dependent cell fate determination during root hair development. The chain is Chaperone protein dnaJ C76, chloroplastic from Arabidopsis thaliana (Mouse-ear cress).